An 85-amino-acid polypeptide reads, in one-letter code: Large ribosomal subunit protein bL27 (85 aa).

A disordered region spans residues 1–22 (MAHKKAGGSTRNGRDSESKRLG).

This sequence belongs to the bacterial ribosomal protein bL27 family.

This is Large ribosomal subunit protein bL27 from Teredinibacter turnerae (strain ATCC 39867 / T7901).